A 150-amino-acid chain; its full sequence is Small ribosomal subunit protein uS9 (150 aa).

The protein belongs to the universal ribosomal protein uS9 family.

The sequence is that of Small ribosomal subunit protein uS9 from Mycolicibacterium smegmatis (strain ATCC 700084 / mc(2)155) (Mycobacterium smegmatis).